A 301-amino-acid polypeptide reads, in one-letter code: Mitochondrial ornithine transporter 1 (301 aa).

Helical transmembrane passes span 5-25 (PAIQ…ACVL), 68-88 (SPAL…YGFC), 110-130 (AAAG…TELV), 168-188 (GFYH…FFFF), 207-227 (LGPI…WLAV), and 237-257 (IQVL…LSIV). Solcar repeat units lie at residues 7-91 (IQAA…CQQV), 104-197 (LSDL…SRSF), and 207-293 (LGPI…SRKL).

Belongs to the mitochondrial carrier (TC 2.A.29) family. Expressed in the liver (at protein level).

The protein resides in the mitochondrion inner membrane. It localises to the mitochondrion membrane. It catalyses the reaction L-citrulline(in) + L-ornithine(out) + H(+)(in) = L-citrulline(out) + L-ornithine(in) + H(+)(out). The enzyme catalyses L-ornithine(in) + L-arginine(out) = L-ornithine(out) + L-arginine(in). It carries out the reaction L-ornithine(out) + L-lysine(in) = L-ornithine(in) + L-lysine(out). The catalysed reaction is L-ornithine(out) + H(+)(in) = L-ornithine(in) + H(+)(out). It catalyses the reaction L-lysine(out) + H(+)(in) = L-lysine(in) + H(+)(out). With respect to regulation, inhibited by pyridoxal 5'-phosphate as well as by mercurials (mersalyl, p-chloromercuribenzene sulfonate, and mercuric chloride), N-ethylmaleimide and spermine. Mitochondrial ornithine-citrulline antiporter. Catalyzes the exchange between cytosolic ornithine and mitochondrial citrulline plus an H(+), the proton compensates the positive charge of ornithine thus leading to an electroneutral transport. Plays a crucial role in the urea cycle, by connecting the cytosolic and the intramitochondrial reactions of the urea cycle. Lysine and arginine are also transported by the antiport mechanism. In addition, catalyzes an electroneutral exchange of ornithine or lysine for H(+), a reaction driven by the pH gradient across the inner membrane. This chain is Mitochondrial ornithine transporter 1 (Slc25a15), found in Rattus norvegicus (Rat).